A 483-amino-acid chain; its full sequence is GTPase Der (483 aa).

2 EngA-type G domains span residues 3–167 (FTLA…GEER) and 212–387 (LRIA…EIWN). Residues 9–16 (GRPNVGKS), 56–60 (DTAGL), 119–122 (NKAE), 218–225 (GRPNAGKS), 265–269 (DTAGM), and 330–333 (NKWD) each bind GTP. The 85-residue stretch at 388–472 (RRISTGRLNR…PIRLSLRTSD (85 aa)) folds into the KH-like domain.

It belongs to the TRAFAC class TrmE-Era-EngA-EngB-Septin-like GTPase superfamily. EngA (Der) GTPase family. As to quaternary structure, associates with the 50S ribosomal subunit.

Functionally, GTPase that plays an essential role in the late steps of ribosome biogenesis. The polypeptide is GTPase Der (Brucella suis biovar 1 (strain 1330)).